We begin with the raw amino-acid sequence, 248 residues long: ATP synthase subunit a, chloroplastic (248 aa).

The next 5 helical transmembrane spans lie at 37 to 57, 96 to 116, 134 to 154, 200 to 220, and 221 to 241; these read AQVL…AILA, VPFI…GALL, DINT…YAGL, LVVA…MMFL, and GLFT…AYIG.

The protein belongs to the ATPase A chain family. As to quaternary structure, F-type ATPases have 2 components, CF(1) - the catalytic core - and CF(0) - the membrane proton channel. CF(1) has five subunits: alpha(3), beta(3), gamma(1), delta(1), epsilon(1). CF(0) has four main subunits: a, b, b' and c.

The protein localises to the plastid. It is found in the chloroplast thylakoid membrane. Functionally, key component of the proton channel; it plays a direct role in the translocation of protons across the membrane. This Anthoceros angustus (Hornwort) protein is ATP synthase subunit a, chloroplastic.